The sequence spans 126 residues: Holo-[acyl-carrier-protein] synthase (126 aa).

Positions 9 and 58 each coordinate Mg(2+).

This sequence belongs to the P-Pant transferase superfamily. AcpS family. Requires Mg(2+) as cofactor.

It is found in the cytoplasm. It catalyses the reaction apo-[ACP] + CoA = holo-[ACP] + adenosine 3',5'-bisphosphate + H(+). Its function is as follows. Transfers the 4'-phosphopantetheine moiety from coenzyme A to a Ser of acyl-carrier-protein. The sequence is that of Holo-[acyl-carrier-protein] synthase from Pectobacterium atrosepticum (strain SCRI 1043 / ATCC BAA-672) (Erwinia carotovora subsp. atroseptica).